The primary structure comprises 1349 residues: Periaxin (1349 aa).

Residue S7 is modified to Phosphoserine. In terms of domain architecture, PDZ spans 16–99; that stretch reads LVEIIVETEA…YKVSFCLKRT (84 aa). A Nuclear export signal motif is present at residues 70-84; the sequence is VFFENFKYEDALRLL. S133 carries the phosphoserine modification. Tandem repeats lie at residues 402–406, 410–414, 418–422, 426–430, 431–435, 436–440, 444–448, 452–456, 457–461, 462–466, 467–471, 472–476, 477–481, 485–489, 493–497, 501–505, 506–510, 514–518, 519–523, 524–528, 532–536, 537–549, 553–557, 558–562, 563–567, 571–575, 576–580, 589–593, 594–598, 599–603, 612–616, 617–621, 622–626, 630–634, 635–639, 643–647, 648–652, 653–657, 661–665, 669–673, and 674–678. The 41 X 5 AA approximate tandem repeats of [LVMGIE]-[PSM]-[EDKA]-[LIVMA]-[AQKHPRT]; that may have a tripeptide spacer of [ALKD]-[IPV]-[KPH] stretch occupies residues 402-678; that stretch reads PPEVKVPKGP…APEVKLPKAP (277 aa). Phosphoserine is present on residues S794 and S974. The span at 1207–1218 shows a compositional bias: basic and acidic residues; sequence AKEGAEEGEKAK. Positions 1207 to 1349 are disordered; that stretch reads AKEGAEEGEK…RMEGAQAAVI (143 aa). Residues 1232 to 1242 show a composition bias toward low complexity; the sequence is SEAVSGEGSPS. 6 positions are modified to phosphoserine: S1236, S1240, S1242, S1289, S1295, and S1327.

It belongs to the periaxin family. As to quaternary structure, homodimer (via PDZ domain). Interacts with SCN10A. Found in a complex with SCN10A. Interacts with DRP2. Identified in a dystroglycan complex that contains at least PRX, DRP2, UTRN, DMD and DAG1. Detected in a complex composed of at least EZR, AHNAK, PPL and PRX. Identified in a complex with EZR, AHNAK, BFSP1, BFSP2, ANK2, PLEC, VIM and spectrin. As to expression, detected in eye lens (at protein level).

The protein localises to the nucleus. It localises to the cytoplasm. Its subcellular location is the cell membrane. It is found in the cell junction. The protein resides in the adherens junction. In terms of biological role, scaffolding protein that functions as part of a dystroglycan complex in Schwann cells, and as part of EZR and AHNAK-containing complexes in eye lens fiber cells. Required for the maintenance of the peripheral myelin sheath that is essential for normal transmission of nerve impulses and normal perception of sensory stimuli. Required for normal transport of MBP mRNA from the perinuclear to the paranodal regions. Required for normal remyelination after nerve injury. Required for normal elongation of Schwann cells and normal length of the internodes between the nodes of Ranvier. The demyelinated nodes of Ranvier permit saltatory transmission of nerve impulses; shorter internodes cause slower transmission of nerve impulses. Required for the formation of appositions between the abaxonal surface of the myelin sheath and the Schwann cell plasma membrane; the Schwann cell cytoplasm is restricted to regions between these appositions. Required for the formation of Cajal bands and of Schmidt-Lanterman incisures that correspond to short, cytoplasm-filled regions on myelinated nerves. Recruits DRP2 to the Schwann cell plasma membrane. Required for normal protein composition of the eye lens fiber cell plasma membrane and normal eye lens fiber cell morphology. The chain is Periaxin (PRX) from Bos taurus (Bovine).